A 376-amino-acid chain; its full sequence is MKDVPGFLQQSQSSGPGQAAVWHRLEELYTKKLWHQLTLQVLDFVQDPCFAQGDGLIKLYENFISEFEHRVNPLSLVEIILHVVRQMTDPNVALSFLEKTREKVKSSDEAVILCKTAIGALKLNIGDLQVTKETIEDVEEMLSNLPGVTSVHSRFYDLSSKYYQTIGNHASYYKDALRFLGCVDIKDLPVSEQQERAFTLGLAGLLGDGVFNFGELLMHPVLESLRDTDRQWLIDTLYAFNSGNVERFQTLKTAWGQQPDLAANEAQLLRKIQLLCLMEMTFTRPANHRQLTFEEIARSAKITVNEVELLVMKALSVGLVKGSIDEVDKRVHMTWVQPRVLDLQQIKGMKDRLEFWCTDVKSMEMLVEHQAHDILT.

The 168-residue stretch at 171–338 (SYYKDALRFL…KRVHMTWVQP (168 aa)) folds into the PCI domain.

The protein belongs to the proteasome subunit S11 family. As to quaternary structure, component of the 19S proteasome regulatory particle complex. The 26S proteasome consists of a 20S core particle (CP) and two 19S regulatory subunits (RP). The regulatory particle is made of a lid composed of 9 subunits including PSMD13, a base containing 6 ATPases and few additional components.

In terms of biological role, component of the 26S proteasome, a multiprotein complex involved in the ATP-dependent degradation of ubiquitinated proteins. This complex plays a key role in the maintenance of protein homeostasis by removing misfolded or damaged proteins, which could impair cellular functions, and by removing proteins whose functions are no longer required. Therefore, the proteasome participates in numerous cellular processes, including cell cycle progression, apoptosis, or DNA damage repair. This Bos taurus (Bovine) protein is 26S proteasome non-ATPase regulatory subunit 13 (PSMD13).